A 393-amino-acid chain; its full sequence is CCA-adding enzyme (393 aa).

Residues G27 and R30 each contribute to the ATP site. G27 and R30 together coordinate CTP. Residues D40 and D42 each coordinate Mg(2+). The ATP site is built by R111, D154, R157, R160, and R163. CTP is bound by residues R111, D154, R157, R160, and R163.

The protein belongs to the tRNA nucleotidyltransferase/poly(A) polymerase family. Bacterial CCA-adding enzyme type 3 subfamily. As to quaternary structure, homodimer. It depends on Mg(2+) as a cofactor.

The enzyme catalyses a tRNA precursor + 2 CTP + ATP = a tRNA with a 3' CCA end + 3 diphosphate. The catalysed reaction is a tRNA with a 3' CCA end + 2 CTP + ATP = a tRNA with a 3' CCACCA end + 3 diphosphate. Catalyzes the addition and repair of the essential 3'-terminal CCA sequence in tRNAs without using a nucleic acid template. Adds these three nucleotides in the order of C, C, and A to the tRNA nucleotide-73, using CTP and ATP as substrates and producing inorganic pyrophosphate. tRNA 3'-terminal CCA addition is required both for tRNA processing and repair. Also involved in tRNA surveillance by mediating tandem CCA addition to generate a CCACCA at the 3' terminus of unstable tRNAs. While stable tRNAs receive only 3'-terminal CCA, unstable tRNAs are marked with CCACCA and rapidly degraded. The polypeptide is CCA-adding enzyme (Listeria innocua serovar 6a (strain ATCC BAA-680 / CLIP 11262)).